The chain runs to 390 residues: Putative transposase YncI (390 aa).

This sequence belongs to the transposase 11 family.

This chain is Putative transposase YncI (yncI), found in Escherichia coli O157:H7.